Consider the following 197-residue polypeptide: Phosphoheptose isomerase (197 aa).

The 162-residue stretch at 36–197 folds into the SIS domain; the sequence is LVHSLAQGGK…VDSLLLGVEE (162 aa). 51–53 provides a ligand contact to substrate; sequence NGG. Zn(2+) is bound by residues His-60 and Glu-64. Substrate contacts are provided by residues Glu-64, 93–94, 119–121, Ser-124, and Gln-174; these read ND and STS. Zn(2+) contacts are provided by Gln-174 and His-182.

The protein belongs to the SIS family. GmhA subfamily. In terms of assembly, homotetramer. Zn(2+) is required as a cofactor.

The protein resides in the cytoplasm. It catalyses the reaction 2 D-sedoheptulose 7-phosphate = D-glycero-alpha-D-manno-heptose 7-phosphate + D-glycero-beta-D-manno-heptose 7-phosphate. It participates in carbohydrate biosynthesis; D-glycero-D-manno-heptose 7-phosphate biosynthesis; D-glycero-alpha-D-manno-heptose 7-phosphate and D-glycero-beta-D-manno-heptose 7-phosphate from sedoheptulose 7-phosphate: step 1/1. Catalyzes the isomerization of sedoheptulose 7-phosphate in D-glycero-D-manno-heptose 7-phosphate. This is Phosphoheptose isomerase from Thiobacillus denitrificans (strain ATCC 25259 / T1).